We begin with the raw amino-acid sequence, 61 residues long: Delta-actitoxin-Avd2c (61 aa).

The N-terminal stretch at 1-20 (MMNRLLVFLMLGAFMLVVSA) is a signal peptide. The propeptide occupies 21-31 (NDAYGGDESLG). 3 disulfides stabilise this stretch: Cys36-Cys51, Cys37-Cys45, and Cys39-Cys56.

Belongs to the sea anemone short toxin (type III) family.

Its subcellular location is the secreted. The protein resides in the nematocyst. In terms of biological role, sodium channel inhibitor. 5 uM completely inhibits voltage-gated sodium channel (Nav) inactivation. This is Delta-actitoxin-Avd2c from Anemonia viridis (Snakelocks anemone).